The following is an 833-amino-acid chain: F1 capsule-anchoring protein (833 aa).

A signal peptide spans 1–25 (MRYSKLFLCAGLTLATLPCWGRAYT). Cysteine 807 and cysteine 829 form a disulfide bridge.

Belongs to the fimbrial export usher family.

The protein localises to the cell outer membrane. In terms of biological role, a probable role in capsular biogenesis. It is likely that the caf1A molecule binds F1 antigen subunits during the extracellular secretion process. The protein is F1 capsule-anchoring protein (caf1A) of Yersinia pestis.